Reading from the N-terminus, the 326-residue chain is Tetraacyldisaccharide 4'-kinase (326 aa).

T55 to T62 lines the ATP pocket.

It belongs to the LpxK family.

It catalyses the reaction a lipid A disaccharide + ATP = a lipid IVA + ADP + H(+). The protein operates within glycolipid biosynthesis; lipid IV(A) biosynthesis; lipid IV(A) from (3R)-3-hydroxytetradecanoyl-[acyl-carrier-protein] and UDP-N-acetyl-alpha-D-glucosamine: step 6/6. Its function is as follows. Transfers the gamma-phosphate of ATP to the 4'-position of a tetraacyldisaccharide 1-phosphate intermediate (termed DS-1-P) to form tetraacyldisaccharide 1,4'-bis-phosphate (lipid IVA). This chain is Tetraacyldisaccharide 4'-kinase, found in Klebsiella pneumoniae subsp. pneumoniae (strain ATCC 700721 / MGH 78578).